A 458-amino-acid polypeptide reads, in one-letter code: Probable M18 family aminopeptidase 1 (458 aa).

Zn(2+) contacts are provided by H95, H170, and H434.

This sequence belongs to the peptidase M18 family. Requires Zn(2+) as cofactor.

The chain is Probable M18 family aminopeptidase 1 from Borrelia garinii subsp. bavariensis (strain ATCC BAA-2496 / DSM 23469 / PBi) (Borreliella bavariensis).